The primary structure comprises 196 residues: MEEEILYKIILVGESGVGKSSILVRFTDNTFSQHFAPTLGVDFNVKTIRNKETGQTVKLQLWDTAGQERFKSITQTFYRGSHGVIVVYDVTDPKSFERCKNWVEDINQYTQDGMIIILVGNKSDMVAQRKVTFEQGQEMAEQLKTKFLEVSAKENNGVTQVFDLLVQDIEATMKNSKVAQNQLNLNSEVGQKRGCC.

Residue 13–20 (GESGVGKS) participates in GTP binding. The Effector region signature appears at 35 to 43 (FAPTLGVDF). Residues 63–67 (DTAGQ) and 121–124 (NKSD) contribute to the GTP site. 2 S-geranylgeranyl cysteine lipidation sites follow: C195 and C196.

This sequence belongs to the small GTPase superfamily. Rab family.

The protein localises to the cell membrane. The polypeptide is Ras-related protein RabC (rabC) (Dictyostelium discoideum (Social amoeba)).